A 378-amino-acid chain; its full sequence is Glutamate 5-kinase (378 aa).

Lys14 contacts ATP. Residues Ser54, Asp141, and Asn153 each coordinate substrate. Residue 173–174 (SD) participates in ATP binding. Residues 279-356 (AGRLTVDAGA…DEISAILGYD (78 aa)) enclose the PUA domain.

This sequence belongs to the glutamate 5-kinase family.

It is found in the cytoplasm. It catalyses the reaction L-glutamate + ATP = L-glutamyl 5-phosphate + ADP. The protein operates within amino-acid biosynthesis; L-proline biosynthesis; L-glutamate 5-semialdehyde from L-glutamate: step 1/2. In terms of biological role, catalyzes the transfer of a phosphate group to glutamate to form L-glutamate 5-phosphate. In Brucella abortus (strain S19), this protein is Glutamate 5-kinase.